A 294-amino-acid chain; its full sequence is MTKIVVIAGPTASGKSDLAISVAQRFNGEIVSADAMQIYRGLDIGTAKVTKAERELVPHHLIDIVDMTDKFSVAEFVTRADQVINDIAKRGKLPVIAGGTGFYVKALLGQQPLDFVASDEAEVALLKQKSLPTLVTMLKAADTILASRVDLNNKQRVIRAIQIARHGKRQEDISRPTYDALIVGIDWPREILYERINRRAQKMLDDGLLSEVEHIMSVGGESIQAGKAIGYKEFFPYIRGEVTREQALLAVQQDSRRYAKRQLTYLRHQIPGLIWLHGTDAATKLTSEVKAWLD.

9-16 contributes to the ATP binding site; that stretch reads GPTASGKS. 11-16 provides a ligand contact to substrate; the sequence is TASGKS. The interaction with substrate tRNA stretch occupies residues 155–159; it reads QRVIR.

The protein belongs to the IPP transferase family. As to quaternary structure, monomer. Mg(2+) serves as cofactor.

The enzyme catalyses adenosine(37) in tRNA + dimethylallyl diphosphate = N(6)-dimethylallyladenosine(37) in tRNA + diphosphate. Catalyzes the transfer of a dimethylallyl group onto the adenine at position 37 in tRNAs that read codons beginning with uridine, leading to the formation of N6-(dimethylallyl)adenosine (i(6)A). This is tRNA dimethylallyltransferase from Leuconostoc citreum (strain KM20).